The chain runs to 425 residues: MLDQRLLRDNPELISQQLGRRGMEVDLTKLQLIAKQERDLEEQRSNLQAEGNRTGKEVGMLIKGGAAPDSDEVKALREKGNRIKQQVAVLEEEEKGLEAKLREQLLALPNLPSADAPEGKSEADNVEVKRWGEPRQGKDLEEHWQLADRLGLFETERSVRIAQSRFITLMGDGARLERALISFMLDLHSTKGYTEVMPPILVNSASLTGSGQLPKFAEESFRCADDDLWLTPTAEVPLTSLHRDEVIAVEQLPLKYAAYTPCFRREAGSYGRDTRGLIRLHQFNKVELYWFCHPEKSAEAHEQLTLDAEAVLEALELPYRRLELCTGDMGFSAARTYDLEVWLPGAGSYREISSCSTCGDFQARRSAIRFKEGKGTQLLHTLNGSGLAIGRTMAALLENGQQPDGSIQLPAALVPYFGRERLTPQ.

The interval 110 to 134 (NLPSADAPEGKSEADNVEVKRWGEP) is disordered. The segment covering 117–134 (PEGKSEADNVEVKRWGEP) has biased composition (basic and acidic residues). An L-serine-binding site is contributed by 233 to 235 (TAE). An ATP-binding site is contributed by 264–266 (RRE). Residue E287 coordinates L-serine. Residue 351–354 (EISS) coordinates ATP. Residue S385 participates in L-serine binding.

The protein belongs to the class-II aminoacyl-tRNA synthetase family. Type-1 seryl-tRNA synthetase subfamily. As to quaternary structure, homodimer. The tRNA molecule binds across the dimer.

The protein resides in the cytoplasm. It carries out the reaction tRNA(Ser) + L-serine + ATP = L-seryl-tRNA(Ser) + AMP + diphosphate + H(+). It catalyses the reaction tRNA(Sec) + L-serine + ATP = L-seryl-tRNA(Sec) + AMP + diphosphate + H(+). Its pathway is aminoacyl-tRNA biosynthesis; selenocysteinyl-tRNA(Sec) biosynthesis; L-seryl-tRNA(Sec) from L-serine and tRNA(Sec): step 1/1. Its function is as follows. Catalyzes the attachment of serine to tRNA(Ser). Is also able to aminoacylate tRNA(Sec) with serine, to form the misacylated tRNA L-seryl-tRNA(Sec), which will be further converted into selenocysteinyl-tRNA(Sec). The polypeptide is Serine--tRNA ligase (Synechococcus sp. (strain RCC307)).